A 363-amino-acid chain; its full sequence is Pyrimidine monooxygenase RutA (363 aa).

Residues 49 to 50 (IK), Asn-115, Glu-124, 140 to 141 (RY), and Ser-190 each bind FMN.

It belongs to the NtaA/SnaA/DszA monooxygenase family. RutA subfamily.

The enzyme catalyses uracil + FMNH2 + NADH + O2 = (Z)-3-ureidoacrylate + FMN + NAD(+) + H2O + H(+). It carries out the reaction thymine + FMNH2 + NADH + O2 = (Z)-2-methylureidoacrylate + FMN + NAD(+) + H2O + H(+). Its function is as follows. Catalyzes the pyrimidine ring opening between N-3 and C-4 by an unusual flavin hydroperoxide-catalyzed mechanism, adding oxygen atoms in the process to yield ureidoacrylate peracid, that immediately reacts with FMN forming ureidoacrylate and FMN-N(5)-oxide. The FMN-N(5)-oxide reacts spontaneously with NADH to produce FMN. Requires the flavin reductase RutF to regenerate FMN in vivo. This chain is Pyrimidine monooxygenase RutA, found in Rhizobium rhizogenes (strain K84 / ATCC BAA-868) (Agrobacterium radiobacter).